The chain runs to 456 residues: Phosphomethylpyrimidine synthase (456 aa).

Substrate-binding positions include Asn-80, Met-109, Tyr-139, His-175, 195 to 197 (SRG), 236 to 239 (DSLR), and Glu-275. Residue His-279 participates in Zn(2+) binding. Residue Tyr-302 participates in substrate binding. Residue His-343 participates in Zn(2+) binding. Residues Cys-423, Cys-426, and Cys-431 each coordinate [4Fe-4S] cluster.

This sequence belongs to the ThiC family. The cofactor is [4Fe-4S] cluster.

It carries out the reaction 5-amino-1-(5-phospho-beta-D-ribosyl)imidazole + S-adenosyl-L-methionine = 4-amino-2-methyl-5-(phosphooxymethyl)pyrimidine + CO + 5'-deoxyadenosine + formate + L-methionine + 3 H(+). Its pathway is cofactor biosynthesis; thiamine diphosphate biosynthesis. In terms of biological role, catalyzes the synthesis of the hydroxymethylpyrimidine phosphate (HMP-P) moiety of thiamine from aminoimidazole ribotide (AIR) in a radical S-adenosyl-L-methionine (SAM)-dependent reaction. This chain is Phosphomethylpyrimidine synthase, found in Synechococcus sp. (strain ATCC 27144 / PCC 6301 / SAUG 1402/1) (Anacystis nidulans).